A 94-amino-acid polypeptide reads, in one-letter code: Putative pterin-4-alpha-carbinolamine dehydratase (94 aa).

This sequence belongs to the pterin-4-alpha-carbinolamine dehydratase family.

The catalysed reaction is (4aS,6R)-4a-hydroxy-L-erythro-5,6,7,8-tetrahydrobiopterin = (6R)-L-erythro-6,7-dihydrobiopterin + H2O. This chain is Putative pterin-4-alpha-carbinolamine dehydratase, found in Chloroflexus aggregans (strain MD-66 / DSM 9485).